The sequence spans 973 residues: Leucine--tRNA ligase, chloroplastic/mitochondrial (973 aa).

The 'HIGH' region motif lies at 126–135; it reads PSGAGLHVGH. Residues 730–734 carry the 'KMSKS' region motif; it reads KMSKS. Lys733 contacts ATP.

The protein belongs to the class-I aminoacyl-tRNA synthetase family.

Its subcellular location is the plastid. The protein localises to the chloroplast. It localises to the mitochondrion. It catalyses the reaction tRNA(Leu) + L-leucine + ATP = L-leucyl-tRNA(Leu) + AMP + diphosphate. Catalyzes the specific attachment of an amino acid to its cognate tRNA in a two step reaction: the amino acid (AA) is first activated by ATP to form AA-AMP and then transferred to the acceptor end of the tRNA. The protein is Leucine--tRNA ligase, chloroplastic/mitochondrial of Arabidopsis thaliana (Mouse-ear cress).